Here is an 868-residue protein sequence, read N- to C-terminus: B-cell receptor CD22 (868 aa).

The first 21 residues, 1–21 (MRVHYLWLLLILGHVASARYS), serve as a signal peptide directing secretion. Positions 22–148 (SANDWTVDHP…MEPIHLNVSE (127 aa)) constitute an Ig-like V-type domain. Over 22 to 708 (SANDWTVDHP…YYSPETIGKR (687 aa)) the chain is Extracellular. Disulfide bonds link Cys-41–Cys-177, Cys-46–Cys-112, and Cys-171–Cys-235. 2 N-linked (GlcNAc...) asparagine glycosylation sites follow: Asn-111 and Asn-122. Residue Arg-130 coordinates N-acetylneuraminate. Asn-145, Asn-174, Asn-271, Asn-281, Asn-384, Asn-414, Asn-466, Asn-567, and Asn-595 each carry an N-linked (GlcNAc...) asparagine glycan. Ig-like C2-type domains follow at residues 153-250 (PYIQ…RTVR), 257-347 (PKLE…VELT), 352-435 (PEPS…AKLD), 440-521 (PKAV…VILN), 526-603 (PRDV…ETLS), and 614-697 (PRRL…STLT). Cystine bridges form between Cys-278–Cys-330, Cys-374–Cys-417, Cys-463–Cys-505, and Cys-550–Cys-592. A disulfide bridge links Cys-637 with Cys-680. Residues 709 to 727 (VALGLGFCLTICILAIWGM) traverse the membrane as a helical segment. The Cytoplasmic portion of the chain corresponds to 728-868 (KIQKKWKQNR…EDVDYVTLKH (141 aa)). The segment covering 738-752 (SQQGLQENSSGQSFF) has biased composition (polar residues). The disordered stretch occupies residues 738-772 (SQQGLQENSSGQSFFVRNKKARRTPLSEGPQSQGC). Phosphoserine is present on residues Ser-746, Ser-747, and Ser-750. Residues 781-786 (VSYAIL) carry the ITIM motif 1 motif. Phosphotyrosine is present on Tyr-783. The disordered stretch occupies residues 790-812 (ESDTHNTGDAGTPATQAPPPNNS). Phosphotyrosine occurs at positions 828, 843, and 863. 2 consecutive short sequence motifs (ITIM motif) follow at residues 841-846 (IHYSEL) and 861-866 (VDYVTL).

It belongs to the immunoglobulin superfamily. SIGLEC (sialic acid binding Ig-like lectin) family. As to quaternary structure, predominantly monomer of isoform CD22-beta. Also found as heterodimer of isoform CD22-beta and a shorter isoform. Interacts with PTPN6/SHP-1, LYN, SYK, PIK3R1/PIK3R2 and PLCG1 upon phosphorylation. Interacts with GRB2, INPP5D and SHC1 upon phosphorylation. May form a complex with INPP5D/SHIP, GRB2 and SHC1. Phosphorylated on tyrosine residues by LYN. Post-translationally, phosphorylation of Tyr-783 and Tyr-843 are involved in binding to SYK. Phosphorylation of Tyr-828 is involved in binding to GRB2. Phosphorylation of Tyr-863 is involved in binding to SYK, PLCG2 and PIK3R1/PIK3R2. As to expression, B-lymphocytes.

It is found in the cell membrane. Most highly expressed siglec (sialic acid-binding immunoglobulin-like lectin) on B-cells that plays a role in various aspects of B-cell biology including differentiation, antigen presentation, and trafficking to bone marrow. Binds to alpha 2,6-linked sialic acid residues of surface molecules such as CD22 itself, CD45 and IgM in a cis configuration. Can also bind to ligands on other cells as an adhesion molecule in a trans configuration. Acts as an inhibitory coreceptor on the surface of B-cells and inhibits B-cell receptor induced signaling, characterized by inhibition of the calcium mobilization and cellular activation. Mechanistically, the immunoreceptor tyrosine-based inhibitory motif domain is phosphorylated by the Src kinase LYN, which in turn leads to the recruitment of the protein tyrosine phosphatase 1/PTPN6, leading to the negative regulation of BCR signaling. If this negative signaling from is of sufficient strength, apoptosis of the B-cell can be induced. The chain is B-cell receptor CD22 from Mus musculus (Mouse).